The following is a 203-amino-acid chain: Probable nicotinate-nucleotide adenylyltransferase (203 aa).

Belongs to the NadD family.

The enzyme catalyses nicotinate beta-D-ribonucleotide + ATP + H(+) = deamido-NAD(+) + diphosphate. It functions in the pathway cofactor biosynthesis; NAD(+) biosynthesis; deamido-NAD(+) from nicotinate D-ribonucleotide: step 1/1. In terms of biological role, catalyzes the reversible adenylation of nicotinate mononucleotide (NaMN) to nicotinic acid adenine dinucleotide (NaAD). The polypeptide is Probable nicotinate-nucleotide adenylyltransferase (Clostridium kluyveri (strain ATCC 8527 / DSM 555 / NBRC 12016 / NCIMB 10680 / K1)).